A 3259-amino-acid polypeptide reads, in one-letter code: Golgin subfamily B member 1 (3259 aa).

M1 is subject to N-acetylmethionine. The Cytoplasmic segment spans residues M1 to R3235. A phosphoserine mark is found at S6, S17, S138, and S528. A coiled-coil region spans residues E48–L593. The disordered stretch occupies residues G119–E142. The segment covering Q131–E142 has biased composition (basic and acidic residues). Residues L624–I652 form a disordered region. The span at V635 to E650 shows a compositional bias: basic and acidic residues. The residue at position 653 (S653) is a Phosphoserine. Coiled-coil stretches lie at residues D677–P1028, L1062–D1245, and G1301–H1779. Residues A944–Y963 form a disordered region. Residues S1747–I1763 are compositionally biased toward basic and acidic residues. Positions S1747–F1829 are disordered. Polar residues-rich tracts occupy residues Q1782–P1794 and S1802–S1820. Positions D1828–E3185 form a coiled coil. Residues S2216, S2735, S2872, and S2884 each carry the phosphoserine modification. The interval R2856–V2876 is disordered. Residues S2865–E2875 are compositionally biased toward polar residues. The interval T2998–Q3021 is disordered. At S3037 the chain carries Phosphoserine. Residues I3107 to Q3140 are disordered. The segment covering N3118 to E3131 has biased composition (basic and acidic residues). Residues V3236 to T3256 traverse the membrane as a helical segment. The Lumenal portion of the chain corresponds to G3257–L3259.

As to quaternary structure, homodimer; disulfide-linked. Interacts with PLK3.

It is found in the golgi apparatus membrane. Its function is as follows. May participate in forming intercisternal cross-bridges of the Golgi complex. The sequence is that of Golgin subfamily B member 1 (GOLGB1) from Homo sapiens (Human).